The primary structure comprises 225 residues: C-reactive protein (225 aa).

An N-terminal signal peptide occupies residues 1 to 19 (MAKLLLYFLLLTSLSDVFG). One can recognise a Pentraxin (PTX) domain in the interval 24–225 (SKKTFVFPKE…EVFIKPQLWP (202 aa)). C55 and C116 form a disulfide bridge. Ca(2+) contacts are provided by N80, Q158, D159, and Q169.

This sequence belongs to the pentraxin family. As to quaternary structure, homopentamer. Pentraxin (or pentaxin) have a discoid arrangement of 5 non-covalently bound subunits. Interacts with FCN1; may regulate monocyte activation by FCN1. Ca(2+) is required as a cofactor. Found in plasma.

It localises to the secreted. Functionally, displays several functions associated with host defense: it promotes agglutination, bacterial capsular swelling, phagocytosis and complement fixation through its calcium-dependent binding to phosphorylcholine. Can interact with DNA and histones and may scavenge nuclear material released from damaged circulating cells. This chain is C-reactive protein (CRP), found in Cavia porcellus (Guinea pig).